The primary structure comprises 133 residues: Profilin-3 (133 aa).

This sequence belongs to the profilin family. As to quaternary structure, occurs in many kinds of cells as a complex with monomeric actin in a 1:1 ratio.

It localises to the cytoplasm. Its subcellular location is the cytoskeleton. Binds to actin and affects the structure of the cytoskeleton. At high concentrations, profilin prevents the polymerization of actin, whereas it enhances it at low concentrations. By binding to PIP2, it inhibits the formation of IP3 and DG. This Ambrosia artemisiifolia (Common ragweed) protein is Profilin-3.